The following is a 224-amino-acid chain: MQSYDIAQFIDHTALTAEKTEQDILDLCNEAIEHNFFSVCINSGYIPLARQKLQNTNVKICTVVGFPLGANLSTVKAFEAKEAIKAGATEIDMVINIGWIKSNQWESVKADIQAVLAACEGALLKVILETCLLTKEEIITACKICRELGVGFVKTSTGFNKGGATVENIALMRQVVGENIGVKASGGVRDTKTAIEMIKNGATRIGSSSGIAIINGLTDNNAIY.

The Proton donor/acceptor role is filled by D92. K154 functions as the Schiff-base intermediate with acetaldehyde in the catalytic mechanism. The active-site Proton donor/acceptor is the K183.

The protein belongs to the DeoC/FbaB aldolase family. DeoC type 1 subfamily.

The protein localises to the cytoplasm. It carries out the reaction 2-deoxy-D-ribose 5-phosphate = D-glyceraldehyde 3-phosphate + acetaldehyde. The protein operates within carbohydrate degradation; 2-deoxy-D-ribose 1-phosphate degradation; D-glyceraldehyde 3-phosphate and acetaldehyde from 2-deoxy-alpha-D-ribose 1-phosphate: step 2/2. Functionally, catalyzes a reversible aldol reaction between acetaldehyde and D-glyceraldehyde 3-phosphate to generate 2-deoxy-D-ribose 5-phosphate. This chain is Deoxyribose-phosphate aldolase, found in Histophilus somni (strain 129Pt) (Haemophilus somnus).